Reading from the N-terminus, the 564-residue chain is Type 2 DNA topoisomerase 6 subunit B (564 aa).

Residues asparagine 46, aspartate 78, threonine 99–lysine 100, glycine 109–serine 116, and lysine 471 each bind ATP.

It belongs to the TOP6B family. Homodimer. Heterotetramer of two Top6A and two Top6B chains.

The catalysed reaction is ATP-dependent breakage, passage and rejoining of double-stranded DNA.. Functionally, relaxes both positive and negative superturns and exhibits a strong decatenase activity. The chain is Type 2 DNA topoisomerase 6 subunit B from Pyrococcus horikoshii (strain ATCC 700860 / DSM 12428 / JCM 9974 / NBRC 100139 / OT-3).